Reading from the N-terminus, the 238-residue chain is uncharacterized protein (238 aa).

The next 7 membrane-spanning stretches (helical) occupy residues 19 to 39 (FIYGMLLANPVWAHIFLLLGW), 64 to 84 (WSVIYFAAAVIFAIPALIYNW), 85 to 105 (QVLYFMFAMLPFVAVNIYFTK), 112 to 132 (LWNDLAGILIFALAGMGSYYF), 141 to 161 (ILWVAIYPTLFFIGTTLYVKS), 176 to 196 (VIFHLLCALIFVVSQQFILAL), and 218 to 238 (VGLIEFAITAVFFILLLVATL).

The protein to B.subtilis YwiC.

The protein resides in the cell membrane. This is an uncharacterized protein from Haemophilus influenzae (strain ATCC 51907 / DSM 11121 / KW20 / Rd).